Consider the following 673-residue polypeptide: tRNA uridine 5-carboxymethylaminomethyl modification enzyme MnmG (673 aa).

FAD is bound at residue 17–22; the sequence is GGGHAG. 284–298 contacts NAD(+); the sequence is GPRYCPSVEDKINRF.

Belongs to the MnmG family. In terms of assembly, homodimer. Heterotetramer of two MnmE and two MnmG subunits. The cofactor is FAD.

It is found in the cytoplasm. In terms of biological role, NAD-binding protein involved in the addition of a carboxymethylaminomethyl (cmnm) group at the wobble position (U34) of certain tRNAs, forming tRNA-cmnm(5)s(2)U34. This chain is tRNA uridine 5-carboxymethylaminomethyl modification enzyme MnmG, found in Polaromonas sp. (strain JS666 / ATCC BAA-500).